A 460-amino-acid polypeptide reads, in one-letter code: Truncated surface protein (460 aa).

A signal peptide spans 1 to 31; the sequence is MRVKEIQRNYQHLWKWSLIILGMIMICKAIE. Residues Cys53 and Cys73 are joined by a disulfide bond. Residues Asn87, Asn135, Asn139, Asn148, Asn177, Asn180, Asn181, Asn194, Asn231, Asn238, Asn259, Asn273, Asn286, and Asn292 are each glycosylated (N-linked (GlcNAc...) asparagine; by host). 5 disulfide bridges follow: Cys118–Cys202, Cys125–Cys193, Cys130–Cys149, Cys215–Cys244, and Cys225–Cys236. The segment at 130–148 is V1; it reads CIDVKNSTNNNTEEATITN. The segment at 149 to 193 is V2; it reads CSFKVPTELKDKTETVHTLFYKLDVVPLNVTNNSSISSTYRLINC. The tract at residues 293 to 325 is V3; sequence CTRPGSDKKIRQSIRIGPGKVFYAKGGITGQAH. Cysteines 293 and 326 form a disulfide. Residues Asn327, Asn350, and Asn356 are each glycosylated (N-linked (GlcNAc...) asparagine; by host). A CD4-binding loop region spans residues 358-368; that stretch reads SSGGDIEITTH. Disulfide bonds link Cys372-Cys439, Cys379-Cys412, and Cys397-Cys404. The tract at residues 379-412 is V4; that stretch reads CNTSELFTGIWNGTWDKNCTSTESNCTGNITLPC. N-linked (GlcNAc...) asparagine; by host glycans are attached at residues Asn380, Asn390, Asn396, Asn403, Asn407, and Asn442.

It localises to the virion membrane. The polypeptide is Truncated surface protein (env) (Human immunodeficiency virus type 1 group M subtype U (isolate Z3) (HIV-1)).